Reading from the N-terminus, the 258-residue chain is Tryptophan synthase alpha chain (258 aa).

Catalysis depends on proton acceptor residues E47 and D58.

It belongs to the TrpA family. As to quaternary structure, tetramer of two alpha and two beta chains.

The catalysed reaction is (1S,2R)-1-C-(indol-3-yl)glycerol 3-phosphate + L-serine = D-glyceraldehyde 3-phosphate + L-tryptophan + H2O. It functions in the pathway amino-acid biosynthesis; L-tryptophan biosynthesis; L-tryptophan from chorismate: step 5/5. Functionally, the alpha subunit is responsible for the aldol cleavage of indoleglycerol phosphate to indole and glyceraldehyde 3-phosphate. This is Tryptophan synthase alpha chain from Bacillus cereus (strain AH820).